Reading from the N-terminus, the 129-residue chain is Large ribosomal subunit protein eL32 (129 aa).

The protein belongs to the eukaryotic ribosomal protein eL32 family.

This Methanosarcina acetivorans (strain ATCC 35395 / DSM 2834 / JCM 12185 / C2A) protein is Large ribosomal subunit protein eL32 (rpl32e).